The chain runs to 105 residues: Ferredoxin (105 aa).

[3Fe-4S] cluster-binding residues include Cys8 and Cys16. 4 residues coordinate [4Fe-4S] cluster: Cys20, Cys39, Cys42, and Cys45. The 4Fe-4S ferredoxin-type domain occupies 30-59 (RSLYIHPDECVDCGACEPVCPVEAIFYEDD). A [3Fe-4S] cluster-binding site is contributed by Cys49.

The cofactor is [4Fe-4S] cluster. Requires [3Fe-4S] cluster as cofactor.

Ferredoxins are iron-sulfur proteins that transfer electrons in a wide variety of metabolic reactions. Functionally, putative electron transport protein for the cytochrome P-450SOY system from the same organism. In Streptomyces griseus, this protein is Ferredoxin.